Here is a 173-residue protein sequence, read N- to C-terminus: Bacterial deubiquitinase-like protein BilC (173 aa).

The Zn(2+) site is built by histidine 103, histidine 105, and aspartate 115.

It belongs to the M67B family. Zn(2+) is required as a cofactor.

Functionally, component of the Bil (bacterial ISG15-like) antiviral defense system, composed of BilA, BilB, BilC and BilD. The Bil system specifically conjugates a ubiquitin-like moiety (bilA) to the bacteriophage central tail fiber (CTF, or tip attachment protein J) via reactions involving E1 (bilD) and E2 (bilB). Modifies CTF of phage SECphi27 and SECphi4, which probably interferes with assembly of the phage tail. Also modifies T5 baseplate hub protein pb3 (gene D16), but not gp27 of phage T6 (Bil defends against T6). BilC is a probable metalloprotease that may cleave non-specifically conjugated targets. Bil-encoding bacteria produce mostly defective phage SECphi27, many of which have phage assembly defects, including no tails. SECphi27 phage progeny produced in E.coli with the Bil system inject less DNA into naive host cells, maybe because the phage are less able to adsorb and inject their DNA into host cells. Expression of the Bil system in E.coli (strain MG1655) confers about 100-fold resistance to phage SECphi27, SECphi18, SECphi6, SECphi4 and T5, but not to SECphi17. When cells expressing the Bil system are infected by phage SECphi27 at low multiplicity of infection (0.03 MOI) the culture survives, at 3.0 MOI the culture collapses at the same time as cells without the Bil system. Its function is as follows. Cleaves a ubiquitin-GFP (Ubl-GFP) fusion protein in vivo. This is Bacterial deubiquitinase-like protein BilC from Collimonas sp. (strain OK412).